Consider the following 197-residue polypeptide: Protein shisa-4 (197 aa).

An N-terminal signal peptide occupies residues 1 to 27 (MPPAGPRGTAPLAAVVLLVLGAPLALA). The Extracellular segment spans residues 28 to 87 (SEDCLWYLDRNGSWHPGFDCEFFTFCCGTCYQRYCCRDLTLLITERQQKHCLAFSPKTIA). Residues 88-108 (GIASAVILFVAVVATTICCFL) traverse the membrane as a helical segment. At 109 to 197 (CSCCYLYRRR…MPPQPSYPGA (89 aa)) the chain is on the cytoplasmic side.

It belongs to the shisa family.

The protein localises to the membrane. The polypeptide is Protein shisa-4 (Shisa4) (Mus musculus (Mouse)).